The sequence spans 182 residues: Bifunctional protein PyrR (182 aa).

The PRPP-binding motif lies at 99-111 (IVLVDDVIFTGRT).

The protein belongs to the purine/pyrimidine phosphoribosyltransferase family. PyrR subfamily. As to quaternary structure, homodimer and homohexamer; in equilibrium.

The enzyme catalyses UMP + diphosphate = 5-phospho-alpha-D-ribose 1-diphosphate + uracil. In terms of biological role, regulates transcriptional attenuation of the pyrimidine nucleotide (pyr) operon by binding in a uridine-dependent manner to specific sites on pyr mRNA. This disrupts an antiterminator hairpin in the RNA and favors formation of a downstream transcription terminator, leading to a reduced expression of downstream genes. Functionally, also displays a weak uracil phosphoribosyltransferase activity which is not physiologically significant. The protein is Bifunctional protein PyrR of Caldicellulosiruptor saccharolyticus (strain ATCC 43494 / DSM 8903 / Tp8T 6331).